The sequence spans 142 residues: Large ribosomal subunit protein uL11 (142 aa).

Belongs to the universal ribosomal protein uL11 family. In terms of assembly, part of the ribosomal stalk of the 50S ribosomal subunit. Interacts with L10 and the large rRNA to form the base of the stalk. L10 forms an elongated spine to which L12 dimers bind in a sequential fashion forming a multimeric L10(L12)X complex. One or more lysine residues are methylated.

Its function is as follows. Forms part of the ribosomal stalk which helps the ribosome interact with GTP-bound translation factors. This chain is Large ribosomal subunit protein uL11, found in Rhodopseudomonas palustris (strain BisB5).